An 80-amino-acid polypeptide reads, in one-letter code: Defensin-like protein 50 (80 aa).

A signal peptide spans methionine 1–alanine 27. Cystine bridges form between cysteine 39-cysteine 79, cysteine 43-cysteine 66, cysteine 52-cysteine 77, and cysteine 56-cysteine 78.

This sequence belongs to the DEFL family.

It is found in the secreted. In Arabidopsis thaliana (Mouse-ear cress), this protein is Defensin-like protein 50 (LCR49).